Here is a 438-residue protein sequence, read N- to C-terminus: Probable 26S proteasome regulatory subunit rpn-6.1 (438 aa).

Residues 1-10 (MRETSSREDT) are compositionally biased toward basic and acidic residues. A disordered region spans residues 1 to 30 (MRETSSREDTNNIGKAPEMSGGTIMDTMTS). The 170-residue stretch at 239-408 (DFKTAFSYFY…GMLIVFEIAV (170 aa)) folds into the PCI domain.

The protein belongs to the proteasome subunit S9 family. In terms of assembly, component of the lid subcomplex of the 19S proteasome regulatory particle complex (also named PA700 complex). The 26S proteasome consists of a 20S proteasome core and two 19S regulatory subunits.

In terms of biological role, component of the lid subcomplex of the 26S proteasome, a multiprotein complex involved in the ATP-dependent degradation of ubiquitinated proteins. In the complex, rpn-6.1 is required for proteasome assembly. Plays a key role in increased proteasome activity in response to proteotoxic stress: induced by daf-16, promoting enhanced assembly of the 26S proteasome and higher proteasome activity, leading to extended lifespan. This is Probable 26S proteasome regulatory subunit rpn-6.1 from Caenorhabditis elegans.